An 82-amino-acid chain; its full sequence is Small ribosomal subunit protein uS17 (82 aa).

The protein belongs to the universal ribosomal protein uS17 family. Part of the 30S ribosomal subunit.

One of the primary rRNA binding proteins, it binds specifically to the 5'-end of 16S ribosomal RNA. The sequence is that of Small ribosomal subunit protein uS17 from Rhodopseudomonas palustris (strain BisA53).